The chain runs to 381 residues: L-lactate dehydrogenase (381 aa).

The 380-residue stretch at methionine 1 to lysine 380 folds into the FMN hydroxy acid dehydrogenase domain. Tyrosine 24 lines the substrate pocket. FMN-binding residues include serine 106 and glutamine 127. A substrate-binding site is contributed by tyrosine 129. Threonine 155 is a binding site for FMN. Arginine 164 provides a ligand contact to substrate. Residue lysine 251 participates in FMN binding. The Proton acceptor role is filled by histidine 275. Residue arginine 278 participates in substrate binding. Residue aspartate 306–arginine 330 coordinates FMN.

The protein belongs to the FMN-dependent alpha-hydroxy acid dehydrogenase family. It depends on FMN as a cofactor.

The protein localises to the cell inner membrane. The catalysed reaction is (S)-lactate + A = pyruvate + AH2. In terms of biological role, catalyzes the conversion of L-lactate to pyruvate. Is coupled to the respiratory chain. This Actinobacillus pleuropneumoniae serotype 3 (strain JL03) protein is L-lactate dehydrogenase.